Reading from the N-terminus, the 338-residue chain is Palmitoyltransferase ZDHHC15 (338 aa).

Residues 1–20 (MLAGCRVALPRGLRCCQRVL) are Cytoplasmic-facing. The chain crosses the membrane as a helical span at residues 21 to 41 (SWVPVVIISLVVLWSYYAYVW). Over 42-56 (ELCLVTVTNPAEKAA) the chain is Lumenal. The helical transmembrane segment at 57–77 (YLLIFHTVFLLFIWTYWKAIF) threads the bilayer. The Cytoplasmic segment spans residues 78–172 (TPPKQPTKKF…NNCIGYSNYK (95 aa)). The DHHC domain maps to 129–179 (RFCDTCQMVKPDRCHHCSVCGMCVLKMDHHCPWVNNCIGYSNYKFFLLFLA). The Zn(2+) site is built by Cys131, Cys134, His144, Cys145, Cys148, Cys151, and His158. The active-site S-palmitoyl cysteine intermediate is Cys159. Residue Cys165 participates in Zn(2+) binding. Residues 173 to 193 (FFLLFLAYAMLYCLYIGCTVF) traverse the membrane as a helical segment. Residues 194-210 (QYFILYWTDTLSNGRAK) are Lumenal-facing. A helical transmembrane segment spans residues 211-234 (FHVLFLLFVALMFFISLMFLFGYH). Topologically, residues 235-338 (CWLVSLNRTT…TSHITVHIEK (104 aa)) are cytoplasmic.

This sequence belongs to the DHHC palmitoyltransferase family. In terms of processing, autopalmitoylated (in vitro).

Its subcellular location is the golgi apparatus membrane. It is found in the postsynaptic density. It catalyses the reaction L-cysteinyl-[protein] + hexadecanoyl-CoA = S-hexadecanoyl-L-cysteinyl-[protein] + CoA. It carries out the reaction L-cysteinyl-[protein] + tetradecanoyl-CoA = S-tetradecanoyl-L-cysteinyl-[protein] + CoA. The enzyme catalyses L-cysteinyl-[protein] + octadecanoyl-CoA = S-octadecanoyl-L-cysteinyl-[protein] + CoA. Palmitoyltransferase that catalyzes the addition of palmitate onto various protein substrates. Has no stringent fatty acid selectivity and in addition to palmitate can also transfer onto target proteins myristate from tetradecanoyl-CoA and stearate from octadecanoyl-CoA. May thereby regulate target proteins association and localization to membranes. In the nervous system, probably catalyzes the palmitoylation of synaptic proteins and is involved in the differentiation of dopaminergic neurons and the development of the diencephalon. The polypeptide is Palmitoyltransferase ZDHHC15 (zdhhc15) (Xenopus laevis (African clawed frog)).